The following is a 432-amino-acid chain: Adenylosuccinate synthetase (432 aa).

GTP is bound by residues 13 to 19 and 41 to 43; these read GDEGKGK and GHT. Residue aspartate 14 is the Proton acceptor of the active site. 2 residues coordinate Mg(2+): aspartate 14 and glycine 41. Residues 14-17, 39-42, threonine 130, arginine 144, glutamine 225, threonine 240, and arginine 304 contribute to the IMP site; these read DEGK and NAGH. Histidine 42 (proton donor) is an active-site residue. 300-306 contributes to the substrate binding site; it reads ATTGRRR. Residues arginine 306, 332-334, and 415-417 contribute to the GTP site; these read KLD and STG.

Belongs to the adenylosuccinate synthetase family. As to quaternary structure, homodimer. It depends on Mg(2+) as a cofactor.

It is found in the cytoplasm. The catalysed reaction is IMP + L-aspartate + GTP = N(6)-(1,2-dicarboxyethyl)-AMP + GDP + phosphate + 2 H(+). It functions in the pathway purine metabolism; AMP biosynthesis via de novo pathway; AMP from IMP: step 1/2. Plays an important role in the de novo pathway of purine nucleotide biosynthesis. Catalyzes the first committed step in the biosynthesis of AMP from IMP. In Salmonella arizonae (strain ATCC BAA-731 / CDC346-86 / RSK2980), this protein is Adenylosuccinate synthetase.